We begin with the raw amino-acid sequence, 443 residues long: Cell division protein FtsA (443 aa).

This sequence belongs to the FtsA/MreB family. Self-interacts. Interacts with FtsZ.

Its subcellular location is the cell inner membrane. Its function is as follows. Cell division protein that is involved in the assembly of the Z ring. May serve as a membrane anchor for the Z ring. This chain is Cell division protein FtsA, found in Agrobacterium fabrum (strain C58 / ATCC 33970) (Agrobacterium tumefaciens (strain C58)).